A 532-amino-acid chain; its full sequence is Fatty-acid amide hydrolase 2 (532 aa).

Residues Leu-11–Leu-31 form a helical membrane-spanning segment. Residues Lys-131 and Ser-206 each act as charge relay system in the active site. Ser-230 (acyl-ester intermediate) is an active-site residue.

This sequence belongs to the amidase family. In terms of assembly, homodimer. Expressed in kidney, liver, lung, prostate, heart and ovary.

It is found in the membrane. The protein resides in the lipid droplet. It carries out the reaction N-(5Z,8Z,11Z,14Z-eicosatetraenoyl)-ethanolamine + H2O = ethanolamine + (5Z,8Z,11Z,14Z)-eicosatetraenoate. It catalyses the reaction (9Z)-octadecenamide + H2O = (9Z)-octadecenoate + NH4(+). The enzyme catalyses N-(9Z-octadecenoyl) ethanolamine + H2O = ethanolamine + (9Z)-octadecenoate. The catalysed reaction is N-hexadecanoylethanolamine + H2O = ethanolamine + hexadecanoate. With respect to regulation, inhibited by O-aryl carbamates and alpha-keto heterocytes. Functionally, catalyzes the hydrolysis of endogenous amidated lipids like the sleep-inducing lipid oleamide ((9Z)-octadecenamide), the endocannabinoid anandamide (N-(5Z,8Z,11Z,14Z-eicosatetraenoyl)-ethanolamine), as well as other fatty amides, to their corresponding fatty acids, thereby regulating the signaling functions of these molecules. Hydrolyzes monounsaturated substrate anandamide preferentially as compared to polyunsaturated substrates. The chain is Fatty-acid amide hydrolase 2 (FAAH2) from Homo sapiens (Human).